The sequence spans 245 residues: Probable transcriptional regulatory protein MAG6590 (245 aa).

It belongs to the TACO1 family.

The protein localises to the cytoplasm. The chain is Probable transcriptional regulatory protein MAG6590 from Mycoplasmopsis agalactiae (strain NCTC 10123 / CIP 59.7 / PG2) (Mycoplasma agalactiae).